The sequence spans 643 residues: 1-deoxy-D-xylulose-5-phosphate synthase (643 aa).

Thiamine diphosphate is bound by residues His-78 and 119-121 (AHS). Residue Asp-150 coordinates Mg(2+). Thiamine diphosphate contacts are provided by residues 151 to 152 (GS), Asn-179, Tyr-288, and Glu-370. A Mg(2+)-binding site is contributed by Asn-179.

Belongs to the transketolase family. DXPS subfamily. In terms of assembly, homodimer. It depends on Mg(2+) as a cofactor. Requires thiamine diphosphate as cofactor.

It carries out the reaction D-glyceraldehyde 3-phosphate + pyruvate + H(+) = 1-deoxy-D-xylulose 5-phosphate + CO2. The protein operates within metabolic intermediate biosynthesis; 1-deoxy-D-xylulose 5-phosphate biosynthesis; 1-deoxy-D-xylulose 5-phosphate from D-glyceraldehyde 3-phosphate and pyruvate: step 1/1. Its function is as follows. Catalyzes the acyloin condensation reaction between C atoms 2 and 3 of pyruvate and glyceraldehyde 3-phosphate to yield 1-deoxy-D-xylulose-5-phosphate (DXP). This chain is 1-deoxy-D-xylulose-5-phosphate synthase, found in Brucella canis (strain ATCC 23365 / NCTC 10854 / RM-666).